Here is a 97-residue protein sequence, read N- to C-terminus: Osteocalcin (97 aa).

Residues 1–18 (MKTLAILVLCSLAAICLT) form the signal peptide. A propeptide spanning residues 19–52 (SSASAGAQPAGDSPVQGGLFMEKDQASAVVRQTR) is cleaved from the precursor. In terms of domain architecture, Gla spans 53-93 (AAKELTLAQTESLREVCETNMACDEMADAQGIVAAYQAFYG). E63, E67, E70, and D76 together coordinate Ca(2+). E63, E67, and E70 each carry 4-carboxyglutamate. C69 and C75 form a disulfide bridge. A 4-carboxyglutamate modification is found at E77.

Belongs to the osteocalcin/matrix Gla protein family. Post-translationally, gamma-carboxyglutamate residues are formed by vitamin K dependent carboxylation by GGCX. These residues are essential for the binding of calcium. As to expression, in the branchial arches, BGP is found outside the chondrocyte-containing zone. It is found in some cells in the basal zone of the branchial filaments, near the branchial arches, and within the extracellular matrix in the medial zone. In the vertebra, BGP is found in the mineralized bone matrix.

It is found in the secreted. The carboxylated form is one of the main organic components of the bone matrix, which constitutes 1-2% of the total bone protein. The carboxylated form binds strongly to apatite and calcium. The protein is Osteocalcin (bglap) of Argyrosomus regius (Meagre).